The following is a 768-amino-acid chain: P-selectin (768 aa).

An N-terminal signal peptide occupies residues 1–41 (MAGCPKGSWKPRLRSVVLGAAQLIWLSALISELVNRKKVAT). Topologically, residues 42-709 (WTYNYSTKAY…QAGTLTIQEA (668 aa)) are extracellular. N-linked (GlcNAc...) asparagine glycosylation is found at Asn-45, Asn-54, and Asn-107. One can recognise a C-type lectin domain in the interval 58–158 (AFCKRHFTDL…PCFKRKRALC (101 aa)). 20 disulfides stabilise this stretch: Cys-60–Cys-158, Cys-131–Cys-150, Cys-168–Cys-183, Cys-185–Cys-194, Cys-200–Cys-244, Cys-230–Cys-257, Cys-262–Cys-306, Cys-292–Cys-319, Cys-324–Cys-368, Cys-354–Cys-381, Cys-386–Cys-430, Cys-416–Cys-443, Cys-448–Cys-492, Cys-478–Cys-505, Cys-510–Cys-554, Cys-540–Cys-567, Cys-580–Cys-624, Cys-610–Cys-637, Cys-642–Cys-686, and Cys-672–Cys-699. Positions 121, 123, and 124 each coordinate Ca(2+). Residue Asn-123 coordinates a carbohydrate. Residues Glu-133 and Asn-146 each contribute to the a carbohydrate site. Ca(2+)-binding residues include Asn-146 and Asp-147. The EGF-like domain maps to 159–195 (YTASCQDMSCNSQGERIETIGSYTCSCYPGFYGPECE). 8 Sushi domains span residues 198–259 (QECG…QCKA), 260–321 (VQCQ…TCEA), 322–383 (IACE…VCEA), 384–445 (LQCQ…ECQA), 446–507 (VSCT…MCEA), 508–569 (IKCP…TCKG), 578–639 (VRCP…VCRA), and 640–701 (VKCS…TCQA). Asn-212 carries an N-linked (GlcNAc...) asparagine glycan. Asn-347 carries N-linked (GlcNAc...) asparagine glycosylation. N-linked (GlcNAc...) asparagine glycosylation occurs at Asn-456. Residue Asn-603 is glycosylated (N-linked (GlcNAc...) asparagine). N-linked (GlcNAc...) asparagine glycans are attached at residues Asn-654, Asn-661, and Asn-679. Residues 710 to 733 (LTYLGGALASTSGLAVGGTLLALL) form a helical membrane-spanning segment. Residues 734–768 (RKRLRKKDDGKCPLNPHSHLGTYGVFTNAAYDPTP) are Cytoplasmic-facing. Cys-745 carries S-palmitoyl cysteine; alternate lipidation. A lipid anchor (S-stearoyl cysteine; alternate) is attached at Cys-745. An Endocytosis signal motif is present at residues 756-759 (YGVF). Residues 759–768 (FTNAAYDPTP) form an interaction with SNX17 region.

This sequence belongs to the selectin/LECAM family. As to quaternary structure, interacts with SNX17. Interacts with SELPLG/PSGL1 and PODXL2 and mediates neutrophil adhesion and leukocyte rolling. This interaction requires the sialyl-Lewis X epitope of SELPLG and PODXL2, and specific tyrosine sulfation on SELPLG. Interacts (via C-type lectin domain) with alpha-IIb/beta3 integrin ITGA2B:ITGB3 and alpha-V/beta-3 integrin ITGAV:ITGB3. Interacts with alpha5/beta1 integrin ITGA5:ITGB1 and alpha4/beta1 integrin ITGA4:ITGB. As to expression, not detected in the absence of exposure to lipopolysaccharide (LPS). Detected only after exposure to lipopolysaccharide (LPS) in the tissues examined: spleen, lung, brain, liver, heart, kidney, thymus and small intestine.

The protein localises to the cell membrane. Functionally, ca(2+)-dependent receptor for myeloid cells that binds to carbohydrates on neutrophils and monocytes. Mediates the interaction of activated endothelial cells or platelets with leukocytes. The ligand recognized is sialyl-Lewis X. Mediates rapid rolling of leukocyte rolling over vascular surfaces during the initial steps in inflammation through interaction with SELPLG. Mediates cell-cell interactions and cell adhesion via the interaction with integrin alpha-IIb/beta3 (ITGA2B:ITGB3) and integrin alpha-V/beta-3 (ITGAV:ITGB3). This Rattus norvegicus (Rat) protein is P-selectin (Selp).